A 368-amino-acid chain; its full sequence is tRNA-specific 2-thiouridylase MnmA (368 aa).

Residues 11 to 18 and M37 each bind ATP; that span reads GMSGGVDS. Positions 97-99 are interaction with target base in tRNA; it reads NPD. The active-site Nucleophile is C102. An intrachain disulfide couples C102 to C199. G127 provides a ligand contact to ATP. Residues 149-151 are interaction with tRNA; that stretch reads KDQ. Catalysis depends on C199, which acts as the Cysteine persulfide intermediate. Positions 311 to 312 are interaction with tRNA; the sequence is RY.

Belongs to the MnmA/TRMU family. Interacts with TusE.

It is found in the cytoplasm. It carries out the reaction S-sulfanyl-L-cysteinyl-[protein] + uridine(34) in tRNA + AH2 + ATP = 2-thiouridine(34) in tRNA + L-cysteinyl-[protein] + A + AMP + diphosphate + H(+). Its function is as follows. Catalyzes the 2-thiolation of uridine at the wobble position (U34) of tRNA(Lys), tRNA(Glu) and tRNA(Gln), leading to the formation of s(2)U34, the first step of tRNA-mnm(5)s(2)U34 synthesis. Sulfur is provided by IscS, via a sulfur-relay system. Binds ATP and its substrate tRNAs. The protein is tRNA-specific 2-thiouridylase MnmA of Citrobacter koseri (strain ATCC BAA-895 / CDC 4225-83 / SGSC4696).